A 149-amino-acid polypeptide reads, in one-letter code: MVIKIHDLRPAPGSKRDKIRVGRGEGSKGKTAGRGTKGTKARKNVSPRFEGGQMPIHMRLPKLRGFKNRFRTEFHGVNVGKLAAAFPQGGTVGIDELISAGLANKGELVKILGDGDLEGVKLEVTAHAFTGSAQEKITAAGGSVTKLDR.

A compositionally biased stretch (basic and acidic residues) spans 1–28; sequence MVIKIHDLRPAPGSKRDKIRVGRGEGSK. The disordered stretch occupies residues 1–54; that stretch reads MVIKIHDLRPAPGSKRDKIRVGRGEGSKGKTAGRGTKGTKARKNVSPRFEGGQM.

Belongs to the universal ribosomal protein uL15 family. Part of the 50S ribosomal subunit.

In terms of biological role, binds to the 23S rRNA. This chain is Large ribosomal subunit protein uL15, found in Saccharopolyspora erythraea (strain ATCC 11635 / DSM 40517 / JCM 4748 / NBRC 13426 / NCIMB 8594 / NRRL 2338).